The sequence spans 358 residues: UPF0324 membrane protein CT0845 (358 aa).

Transmembrane regions (helical) follow at residues 36-53, 57-76, 83-105, 115-134, 146-168, 178-200, 244-261, 276-295, 307-325, and 335-357; these read YFPG…ATFL, YGAP…RFLS, LVGI…GMRI, VKPV…FGLA, GVLT…AAVL, TIFT…PVVA, LLRV…SLIF, LLPP…SLGV, VSRW…KTSL, and PVSI…VVWM.

The protein belongs to the UPF0324 family.

Its subcellular location is the cell membrane. In Chlorobaculum tepidum (strain ATCC 49652 / DSM 12025 / NBRC 103806 / TLS) (Chlorobium tepidum), this protein is UPF0324 membrane protein CT0845.